Reading from the N-terminus, the 535-residue chain is uncharacterized protein (535 aa).

The next 6 membrane-spanning stretches (helical) occupy residues 63–83, 90–110, 143–163, 168–188, 226–246, and 258–278; these read LTGIVVALLVVTFAFPVPSIY, VTFGVAPAYATLALAIGTYWI, VAAVHLILWDIGGALLATLYG, VFVTIILFSVTICGVLVATNC, SLGSGVPVTGIATTALYVLLV, and VLILSITTLIFGFLVMWILAW. One can recognise an HAMP domain in the interval 279 to 330; that stretch reads LTAAPVRVVRAALKRVEQGDLRGDLVVFDGTELGELQRGFNAMVNGLRERER. A Guanylate cyclase domain is found at 362–486; that stretch reads AVVFVDIVGS…KPVNQAARLC (125 aa).

Belongs to the adenylyl cyclase class-3 family.

It localises to the cell membrane. This is an uncharacterized protein from Mycobacterium tuberculosis (strain ATCC 25618 / H37Rv).